A 296-amino-acid polypeptide reads, in one-letter code: Light-independent protochlorophyllide reductase iron-sulfur ATP-binding protein (296 aa).

ATP-binding positions include 39 to 44 and Lys68; that span reads GIGKST. Ser43 serves as a coordination point for Mg(2+). [4Fe-4S] cluster is bound by residues Cys124 and Cys158. ATP is bound at residue 209–210; sequence NR.

This sequence belongs to the NifH/BchL/ChlL family. Homodimer. Protochlorophyllide reductase is composed of three subunits; ChlL, ChlN and ChlB. [4Fe-4S] cluster is required as a cofactor.

It carries out the reaction chlorophyllide a + oxidized 2[4Fe-4S]-[ferredoxin] + 2 ADP + 2 phosphate = protochlorophyllide a + reduced 2[4Fe-4S]-[ferredoxin] + 2 ATP + 2 H2O. Its pathway is porphyrin-containing compound metabolism; chlorophyll biosynthesis (light-independent). In terms of biological role, component of the dark-operative protochlorophyllide reductase (DPOR) that uses Mg-ATP and reduced ferredoxin to reduce ring D of protochlorophyllide (Pchlide) to form chlorophyllide a (Chlide). This reaction is light-independent. The L component serves as a unique electron donor to the NB-component of the complex, and binds Mg-ATP. This chain is Light-independent protochlorophyllide reductase iron-sulfur ATP-binding protein, found in Synechococcus sp. (strain WH7803).